Consider the following 360-residue polypeptide: Nucleoporin SEH1 (360 aa).

6 WD repeats span residues 10 to 49, 55 to 96, 111 to 152, 160 to 210, 217 to 258, and 276 to 315; these read DHKDLIHDVSFDFHGRRMATCSSDQSVKVWDKSENGDWHC, THSG…SNDK, DSRT…NLSQ, SCKL…RKYA, SVSD…KELS, and NHNSQVWRVSWNITGTVLASSGDDGTVRLWKANYMDNWKC.

This sequence belongs to the WD repeat SEC13 family. As to quaternary structure, component of the Nup107-160 subcomplex of the nuclear pore complex (NPC). The Nup107-160 subcomplex includes NUP160, NUP133, NUP107, NUP98, NUP85, NUP43, NUP37, SEH1 and SEC13. Component of the GATOR2 subcomplex, composed of MIOS, SEC13, SEH1L, WDR24 and WDR59. The GATOR2 complex interacts with CASTOR1 and CASTOR2; the interaction is negatively regulated by arginine. The GATOR2 complex interacts with SESN1, SESN2 and SESN3; the interaction is negatively regulated by amino acids.

The protein resides in the chromosome. It localises to the centromere. The protein localises to the kinetochore. It is found in the nucleus. Its subcellular location is the nuclear pore complex. The protein resides in the lysosome membrane. With respect to regulation, the GATOR2 complex is negatively regulated by the upstream amino acid sensors CASTOR1 and SESN2, which sequester the GATOR2 complex in absence of amino acids. In the presence of abundant amino acids, GATOR2 is released from CASTOR1 and SESN2 and activated. Component of the Nup107-160 subcomplex of the nuclear pore complex (NPC). The Nup107-160 subcomplex is required for the assembly of a functional NPC. The Nup107-160 subcomplex is also required for normal kinetochore microtubule attachment, mitotic progression and chromosome segregation. This subunit plays a role in recruitment of the Nup107-160 subcomplex to the kinetochore. Functionally, as a component of the GATOR2 complex, functions as an activator of the amino acid-sensing branch of the mTORC1 signaling pathway. The GATOR2 complex indirectly activates mTORC1 through the inhibition of the GATOR1 subcomplex. GATOR2 probably acts as an E3 ubiquitin-protein ligase toward GATOR1. In the presence of abundant amino acids, the GATOR2 complex mediates ubiquitination of the NPRL2 core component of the GATOR1 complex, leading to GATOR1 inactivation. In the absence of amino acids, GATOR2 is inhibited, activating the GATOR1 complex. The sequence is that of Nucleoporin SEH1 (seh1l) from Xenopus tropicalis (Western clawed frog).